A 700-amino-acid polypeptide reads, in one-letter code: Elongation factor G 2 (700 aa).

Residues 8 to 290 form the tr-type G domain; that stretch reads ERYRNIGISA…AVLDFLPSPI (283 aa). GTP contacts are provided by residues 17-24, 88-92, and 142-145; these read AHIDAGKT, DTPGH, and NKMD.

Belongs to the TRAFAC class translation factor GTPase superfamily. Classic translation factor GTPase family. EF-G/EF-2 subfamily.

It is found in the cytoplasm. In terms of biological role, catalyzes the GTP-dependent ribosomal translocation step during translation elongation. During this step, the ribosome changes from the pre-translocational (PRE) to the post-translocational (POST) state as the newly formed A-site-bound peptidyl-tRNA and P-site-bound deacylated tRNA move to the P and E sites, respectively. Catalyzes the coordinated movement of the two tRNA molecules, the mRNA and conformational changes in the ribosome. This Paraburkholderia xenovorans (strain LB400) protein is Elongation factor G 2.